The primary structure comprises 196 residues: Large ribosomal subunit protein eL15 (196 aa).

Composition is skewed to basic residues over residues 160 to 172 and 186 to 196; these read ATRG…RKGR and PSIRAHKSRGK. Residues 160-196 are disordered; the sequence is ATRGKTSAGRKGRGMSTRGKGTEKTRPSIRAHKSRGK.

This sequence belongs to the eukaryotic ribosomal protein eL15 family.

In Methanosarcina mazei (strain ATCC BAA-159 / DSM 3647 / Goe1 / Go1 / JCM 11833 / OCM 88) (Methanosarcina frisia), this protein is Large ribosomal subunit protein eL15 (rpl15e).